A 351-amino-acid polypeptide reads, in one-letter code: Glycerol-1-phosphate dehydrogenase [NAD(P)+] (351 aa).

Residues 97–101 and 119–122 each bind NAD(+); these read GTVID and TSPS. Residue aspartate 124 participates in substrate binding. NAD(+) is bound at residue serine 128. Aspartate 171 serves as a coordination point for substrate. Positions 171 and 251 each coordinate Zn(2+). Histidine 255 contacts substrate. Residue histidine 267 participates in Zn(2+) binding.

The protein belongs to the glycerol-1-phosphate dehydrogenase family. Homodimer. Requires Zn(2+) as cofactor.

Its subcellular location is the cytoplasm. The enzyme catalyses sn-glycerol 1-phosphate + NAD(+) = dihydroxyacetone phosphate + NADH + H(+). The catalysed reaction is sn-glycerol 1-phosphate + NADP(+) = dihydroxyacetone phosphate + NADPH + H(+). Its pathway is membrane lipid metabolism; glycerophospholipid metabolism. Its function is as follows. Catalyzes the NAD(P)H-dependent reduction of dihydroxyacetonephosphate (DHAP or glycerone phosphate) to glycerol 1-phosphate (G1P). The G1P thus generated is used as the glycerophosphate backbone of phospholipids in the cellular membranes of Archaea. The polypeptide is Glycerol-1-phosphate dehydrogenase [NAD(P)+] (Sulfolobus acidocaldarius (strain ATCC 33909 / DSM 639 / JCM 8929 / NBRC 15157 / NCIMB 11770)).